We begin with the raw amino-acid sequence, 374 residues long: tRNA-specific 2-thiouridylase MnmA (374 aa).

ATP is bound by residues 17–24 (GMSGGVDS) and M43. Residues 103-105 (NPD) form an interaction with target base in tRNA region. C108 functions as the Nucleophile in the catalytic mechanism. C108 and C204 are oxidised to a cystine. G132 contacts ATP. An interaction with tRNA region spans residues 154-156 (KDQ). C204 acts as the Cysteine persulfide intermediate in catalysis. The interval 316-317 (RY) is interaction with tRNA.

It belongs to the MnmA/TRMU family.

It is found in the cytoplasm. The catalysed reaction is S-sulfanyl-L-cysteinyl-[protein] + uridine(34) in tRNA + AH2 + ATP = 2-thiouridine(34) in tRNA + L-cysteinyl-[protein] + A + AMP + diphosphate + H(+). Functionally, catalyzes the 2-thiolation of uridine at the wobble position (U34) of tRNA, leading to the formation of s(2)U34. The sequence is that of tRNA-specific 2-thiouridylase MnmA from Pseudomonas entomophila (strain L48).